Consider the following 280-residue polypeptide: F420-dependent methylenetetrahydromethanopterin dehydrogenase (280 aa).

Belongs to the MTD family.

It carries out the reaction 5,10-methylenetetrahydromethanopterin + oxidized coenzyme F420-(gamma-L-Glu)(n) + 2 H(+) = 5,10-methenyl-5,6,7,8-tetrahydromethanopterin + reduced coenzyme F420-(gamma-L-Glu)(n). It functions in the pathway one-carbon metabolism; methanogenesis from CO(2); 5,10-methylene-5,6,7,8-tetrahydromethanopterin from 5,10-methenyl-5,6,7,8-tetrahydromethanopterin (coenzyme F420 route): step 1/1. Catalyzes the reversible reduction of methenyl-H(4)MPT(+) to methylene-H(4)MPT. This Methanospirillum hungatei JF-1 (strain ATCC 27890 / DSM 864 / NBRC 100397 / JF-1) protein is F420-dependent methylenetetrahydromethanopterin dehydrogenase.